Here is a 163-residue protein sequence, read N- to C-terminus: MRLTSKGRYAVTAMLDVALNSETGPVPLADISERQGISLSYLEQLFSRLRKNGLVSSVRGPGGGYLLGKDAGSIAVGEVISAVDESVDATRCQGKGGCQGGDKCLTHALWRDLSERLTGFLNNITLGELVNNQEILDVSGRQHQHETQRNARTQDAIDVKLRA.

The HTH rrf2-type domain occupies 2-131 (RLTSKGRYAV…NNITLGELVN (130 aa)). The segment at residues 28 to 51 (LADISERQGISLSYLEQLFSRLRK) is a DNA-binding region (H-T-H motif). Residues cysteine 92, cysteine 98, and cysteine 104 each contribute to the [2Fe-2S] cluster site.

It depends on [2Fe-2S] cluster as a cofactor.

Its function is as follows. Regulates the transcription of several operons and genes involved in the biogenesis of Fe-S clusters and Fe-S-containing proteins. In Klebsiella pneumoniae subsp. pneumoniae (strain ATCC 700721 / MGH 78578), this protein is HTH-type transcriptional regulator IscR.